The following is a 1103-amino-acid chain: PH, RCC1 and FYVE domains-containing protein 1 (1103 aa).

Positions 22–123 (KKGTQLLKYG…IWIGGLKTLI (102 aa)) constitute a PH domain. Positions 144–233 (DASRELTSSS…SSSHGSAADD (90 aa)) are disordered. Composition is skewed to low complexity over residues 151-169 (SSSP…SSPG) and 217-231 (SVSS…GSAA). RCC1 repeat units follow at residues 237 to 298 (LGDV…FVTR), 299 to 351 (QGEI…AVTL), 353 to 406 (GELY…LITS), 407 to 458 (YGRL…AVVE), 471 to 522 (SGKL…GLTT), 524 to 574 (GQVF…ALTS), and 575 to 626 (RNEV…AICL). The FYVE-type zinc-finger motif lies at 632–694 (GAEQSQCSTC…VCDSCYVKLS (63 aa)). Positions 638, 641, 654, 657, 662, 665, 686, and 689 each coordinate Zn(2+). The tract at residues 783 to 818 (ATPKLAQAPSGISSRSVSPFSRRSSPPRSATPMPST) is disordered. Over residues 791 to 818 (PSGISSRSVSPFSRRSSPPRSATPMPST) the composition is skewed to low complexity. Residues 828 to 904 (ADNMKKTNEI…IAQLKDVAEK (77 aa)) adopt a coiled-coil conformation. A compositionally biased stretch (polar residues) spans 962–979 (NLQSPKQTPRASERNSNA). The interval 962–988 (NLQSPKQTPRASERNSNAYPADPRLSS) is disordered. One can recognise a BRX domain in the interval 1023-1078 (AEWIEQYEPGVYITLVALHDGTRDLRRVRFSRRRFGEHQAETWWSENREKVYEKYN). A disordered region spans residues 1079–1103 (VRVSEKSTASQTHRDRDEEEEDIPH).

In terms of tissue distribution, mostly expressed in flowers, and, to a lower extent, in stems, leaves, siliques, seeds.

In terms of biological role, binds to phosphatidic acid and to phosphoinositides such as PtdIns3P, PtdIns(3,4)P(2), PtdIns(3,4,5)P(3) and PtdIns(4,5)P(2). Catalyzes guanine nucleotide exchange on specific Rab proteins. The sequence is that of PH, RCC1 and FYVE domains-containing protein 1 from Arabidopsis thaliana (Mouse-ear cress).